Consider the following 275-residue polypeptide: T-cell ecto-ADP-ribosyltransferase 1 (275 aa).

Positions 1–20 (MPSNICKFFLTWWLIQQVTG) are cleaved as a signal peptide. 2 disulfide bridges follow: C41–C243 and C141–C193. N58 is a glycosylation site (N-linked (GlcNAc...) asparagine). The region spanning 61-238 (EKLKVAWEEA…IFLDSPKRKK (178 aa)) is the TR mART core domain. Positions 98, 146, and 164 each coordinate NAD(+). Residue R146 is part of the active site. The active site involves S167. S202 is a binding site for NAD(+). E209 is a catalytic residue. Residue S246 is the site of GPI-anchor amidated serine attachment. Residues 247-275 (SAGTRESCVSLFLVVLTSLLVQLLCLAEP) constitute a propeptide, removed in mature form.

The protein belongs to the Arg-specific ADP-ribosyltransferase family. Postthymic T-cells.

It localises to the cell membrane. The catalysed reaction is L-arginyl-[protein] + NAD(+) = N(omega)-(ADP-D-ribosyl)-L-arginyl-[protein] + nicotinamide + H(+). The enzyme catalyses NAD(+) + H2O = ADP-D-ribose + nicotinamide + H(+). Has NAD(+) glycohydrolase activity and extremely low ADP-ribosyltransferase activity. This Rattus norvegicus (Rat) protein is T-cell ecto-ADP-ribosyltransferase 1 (Art2a).